The sequence spans 414 residues: Mu-like prophage FluMu F protein (414 aa).

To phage Mu protein F.

Involved in virion morphogenesis. The chain is Mu-like prophage FluMu F protein from Haemophilus influenzae (strain ATCC 51907 / DSM 11121 / KW20 / Rd).